The chain runs to 413 residues: Ureide permease 5 (413 aa).

Topologically, residues 1–18 (MMIAQELGIYVVESKGGA) are extracellular. The helical transmembrane segment at 19–39 (ILCLLLSLLCLGTWPALMALL) threads the bilayer. The Cytoplasmic segment spans residues 40 to 50 (ERRGRLPQHTY). The helical transmembrane segment at 51–71 (LDYSITNFLAAIFIAFVFGGI) threads the bilayer. At 72–91 (GESTHEAPSFITQLTQIQDN) the chain is on the extracellular side. A helical membrane pass occupies residues 92–112 (WPSVLFAMAGGVGLSIGNLAT). The Cytoplasmic segment spans residues 113–115 (QYS). A helical membrane pass occupies residues 116 to 136 (LAFVGLSVTEVTAASITVVVG). Topologically, residues 137–149 (TTVNYFLDNGLNR) are extracellular. Residues 150–170 (ADILFSGVGCFMVAVCLGSAV) traverse the membrane as a helical segment. At 171–240 (HSSNSADIKA…RAIKVLGKSM (70 aa)) the chain is on the cytoplasmic side. Position 232–239 (232–239 (AIKVLGKS)) interacts with ATP. Residues 241 to 261 (VVGLGITFFAGLSFSLFSPLF) form a helical membrane-spanning segment. Over 262-278 (NLATNDQWHTLKQGVPK) the chain is Extracellular. Residues 279–299 (LIVYTAFFYFSLSCFVIAVAL) traverse the membrane as a helical segment. Over 300-326 (NISFLYKPVLDSPRSSFREYLSDWNGR) the chain is Cytoplasmic. Residues 327 to 347 (GWALAAGLLCGFGNGLQFMGG) form a helical membrane-spanning segment. Residues 348–352 (QAAGY) are Extracellular-facing. A helical membrane pass occupies residues 353-373 (AASDAVQALPLVSTFWGIYLF). Over 374-384 (GEYRRSSTRTY) the chain is Cytoplasmic. Residues 385–405 (ALLVGMLVMFTVAVGLLMASA) form a helical membrane-spanning segment. The Extracellular segment spans residues 406–413 (GERETRFT).

It belongs to the plant ureide permease (TC 2.A.7.19) family. Expressed in lateral roots, rosette leaves, stems, stipules, flower stigma, pedicels and the connective tissue between pollen sacks.

The protein localises to the membrane. In terms of biological role, proton-coupled transporter that transports a wide spectrum of oxo derivatives of heterocyclic nitrogen compounds, including allantoin, uric acid and xanthine, but not adenine. Mediates transport of uracil and 5-fluorouracil (a toxic uracil analog). Functionally, proton-coupled transporter that transports a wide spectrum of oxo derivatives of heterocyclic nitrogen compounds, including allantoin, xanthine and uracil. This Arabidopsis thaliana (Mouse-ear cress) protein is Ureide permease 5.